Consider the following 302-residue polypeptide: Epoxyqueuosine reductase (302 aa).

The active-site Proton donor is the Asp-128. Positions 170–202 (LPLQADGPIRDYCGTCTACIDACPTDAITPYEV) constitute a 4Fe-4S ferredoxin-type 1 domain. Cys-182, Cys-185, Cys-188, Cys-192, Cys-207, Cys-234, Cys-237, and Cys-241 together coordinate [4Fe-4S] cluster. Residues 221–251 (NEFKGKMENWIFGCDICQDVCPWNSFARPHS) enclose the 4Fe-4S ferredoxin-type 2 domain.

The protein belongs to the QueG family. In terms of assembly, monomer. Requires cob(II)alamin as cofactor. [4Fe-4S] cluster serves as cofactor.

It localises to the cytoplasm. It catalyses the reaction epoxyqueuosine(34) in tRNA + AH2 = queuosine(34) in tRNA + A + H2O. It participates in tRNA modification; tRNA-queuosine biosynthesis. Catalyzes the conversion of epoxyqueuosine (oQ) to queuosine (Q), which is a hypermodified base found in the wobble positions of tRNA(Asp), tRNA(Asn), tRNA(His) and tRNA(Tyr). This is Epoxyqueuosine reductase from Leadbetterella byssophila (strain DSM 17132 / JCM 16389 / KACC 11308 / NBRC 106382 / 4M15).